Consider the following 698-residue polypeptide: MHEEFPTETPAVVTCGLPYANGDLHVGHLRTYVSGDAYARALESLGQSVAFVSGSDMHGTPIAVNAAEEGVDPESFAVEYHEQYEETFPQFNIEFDNYGHTHDETNTEMTRSFVRSWIDDDHVVEKEIEVAWDAEADQPLPDRFVEGTCPYCGEKARGDECDEGCQRHLEPGEIEAPVSTITGNPAEYRTRPHKFLRLSDFQEYLRGFIDRLEGTENAQNQPREWIEGELQDLCITRDMDWGIDYPADGDESGEDLVLYVWVDAPIEYVSSTKQYSEQVGRDEYDWEAVWKNQVDGVPPEGGEIVHIIGHDIIQHHTVFWPAMLRGAGFNEPRAVMACGFVNLDGDAFSTSRNRAVWADDYIESGLHPDLYRYHIITGSEFTADVDFSWDGLQERTNSELVGTLGNFLYRSLLFAERNYGGTPDAAVSDEVRNEIEAAMADFRTAVNDYRVRGLGRAPVELATFGNEYIQRHEPWKLTDDDPEKARQVIRDCVQIAKAIAVLAEPVLPGKAAALWDQLGEDGSVHDAELGAALESPPEAFDEPDELFEKLEDDRIEELNRQLEERIEAADAGDEEGEDEDEEPPAADLEPVADERISFGDFQDLDIRVAEVLEAEPIEGADDLAKLAVDIGVETRQIVAGIKQLHDLDSLSGTRIVVVANLEKAELFGVESNGMLLAAGEQADLLTTLEDAEPGTKVQ.

A 'HIGH' region motif is present at residues 18-28; the sequence is PYANGDLHVGH. Positions 149, 152, 161, and 165 each coordinate Zn(2+). T350 is a binding site for ATP. A disordered region spans residues 567–590; it reads EAADAGDEEGEDEDEEPPAADLEP. A compositionally biased stretch (acidic residues) spans 570 to 584; sequence DAGDEEGEDEDEEPP. Residues 600–698 form the tRNA-binding domain; the sequence is DFQDLDIRVA…EDAEPGTKVQ (99 aa).

This sequence belongs to the class-I aminoacyl-tRNA synthetase family. MetG type 1 subfamily. Homodimer. Zn(2+) is required as a cofactor.

Its subcellular location is the cytoplasm. It carries out the reaction tRNA(Met) + L-methionine + ATP = L-methionyl-tRNA(Met) + AMP + diphosphate. Functionally, is required not only for elongation of protein synthesis but also for the initiation of all mRNA translation through initiator tRNA(fMet) aminoacylation. This chain is Methionine--tRNA ligase, found in Natronomonas pharaonis (strain ATCC 35678 / DSM 2160 / CIP 103997 / JCM 8858 / NBRC 14720 / NCIMB 2260 / Gabara) (Halobacterium pharaonis).